We begin with the raw amino-acid sequence, 583 residues long: Thiol:disulfide interchange protein DsbD (583 aa).

The first 20 residues, 1–20 (MLKRFIFLLVGITLTLSAHA), serve as a signal peptide directing secretion. 2 cysteine pairs are disulfide-bonded: cysteine 123–cysteine 128 and cysteine 200–cysteine 322. 8 consecutive transmembrane segments (helical) span residues 185-205 (IFWFFLLGIGLAFTPCVLPML), 237-257 (LTYTLLGLVVAAIGLPFQVAL), 261-281 (PVLISLAILFTILAASMFGLF), 302-322 (GGAFGSVFVMGMIAGLVASPC), 344-364 (GLALYLLALGMGIPLILITLF), 375-395 (WLLKVKTAFGFVMLALPVFLL), 405-425 (PLMWSALAMVFVGWLISVIPT), and 433-453 (VRIVLFLTFAVASYPWANLVW). A Thioredoxin domain is found at 440–583 (TFAVASYPWA…NQFLNWLNQL (144 aa)). Cysteine 500 and cysteine 503 are disulfide-bonded.

Belongs to the thioredoxin family. DsbD subfamily.

The protein resides in the cell inner membrane. It catalyses the reaction [protein]-dithiol + NAD(+) = [protein]-disulfide + NADH + H(+). It carries out the reaction [protein]-dithiol + NADP(+) = [protein]-disulfide + NADPH + H(+). Functionally, required to facilitate the formation of correct disulfide bonds in some periplasmic proteins and for the assembly of the periplasmic c-type cytochromes. Acts by transferring electrons from cytoplasmic thioredoxin to the periplasm. This transfer involves a cascade of disulfide bond formation and reduction steps. The sequence is that of Thiol:disulfide interchange protein DsbD from Actinobacillus pleuropneumoniae serotype 5b (strain L20).